The chain runs to 326 residues: DNA repair protein XRCC4 (326 aa).

The interval 1–212 (MERKVSRIYL…QLEESTKPER (212 aa)) is interaction with IFFO1. A Phosphoserine; by PRKDC modification is found at serine 53. Coiled coils occupy residues 131–165 (LDTI…FEKC) and 185–209 (NEKK…ESTK). The segment at 180–211 (FILVLNEKKTKIRSLHKLLNEVQQLEESTKPE) is interaction with LIG4. Serine 193 bears the Phosphoserine; by PRKDC mark. Residues 203 to 326 (QLEESTKPER…RNSSPEDLFD (124 aa)) are disordered. Basic and acidic residues predominate over residues 206–226 (ESTKPERENPCSDKTPEEHGL). Tyrosine 227 carries the post-translational modification Phosphotyrosine. The residue at position 230 (serine 230) is a Phosphoserine. At threonine 231 the chain carries Phosphothreonine. Position 235 is a phosphoserine (serine 235). Threonine 244 bears the Phosphothreonine mark. The residue at position 250 (serine 250) is a Phosphoserine. Phosphoserine; by PRKDC is present on serine 254. Positions 264 to 269 (RKRRHR) match the Nuclear localization signal motif. Lysine 290 participates in a covalent cross-link: Glycyl lysine isopeptide (Lys-Gly) (interchain with G-Cter in ubiquitin). Serine 295 carries the phosphoserine; by PRKDC modification. Residue serine 296 is modified to Phosphoserine. 2 positions are modified to phosphoserine; by PRKDC: serine 307 and serine 312. The span at 307–326 (SAENMSLETLRNSSPEDLFD) shows a compositional bias: polar residues. Threonine 315 carries the phosphothreonine; by PRKDC modification. Residues serine 319 and serine 320 each carry the phosphoserine; by PRKDC modification.

This sequence belongs to the XRCC4-XLF family. XRCC4 subfamily. Homodimer and homotetramer in solution. Interacts with NHEJ1/XLF; the interaction is direct and is mediated via a head-to-head interaction between N-terminal head regions. Interacts with LIG4; the LIG4-XRCC4 subcomplex has a 1:2 stoichiometry and XRCC4 is required for LIG4 stability. Component of the core long-range non-homologous end joining (NHEJ) complex (also named DNA-PK complex) composed of PRKDC, LIG4, XRCC4, XRCC6/Ku70, XRCC5/Ku86 and NHEJ1/XLF. Additional component of the NHEJ complex includes PAXX. Following autophosphorylation, PRKDC dissociates from DNA, leading to formation of the short-range NHEJ complex, composed of LIG4, XRCC4, XRCC6/Ku70, XRCC5/Ku86 and NHEJ1/XLF. Interacts with PRKDC; the interaction is direct. Interacts with XRCC6/Ku70; the interaction is direct. Interacts with APTX and APLF. Forms a heterotetramer with IFFO1; the interaction involves LIG4-free XRCC4 and leads to the relocalization of IFFO1 to the sites of DNA damage. Interacts with PNKP; mainly interacts with PNKP when phosphorylated at Thr-231, but is also able to interact at much lower level with PNKP when not unphosphorylated. Interacts with POLL (DNA polymerase lambda). As to quaternary structure, interacts with XKR4; interacts with the processed form of XKR4, which is cleaved by caspase. In terms of processing, phosphorylated by PRKDC at the C-terminus in response to DNA damage; Ser-254 and Ser-312 constitute the main phosphorylation sites. Phosphorylation by PRKDC at the C-terminus of XRCC4 and NHEJ1/XLF are highly redundant and regulate ability of the XRCC4-NHEJ1/XLF subcomplex to bridge DNA. Phosphorylation by PRKDC does not prevent interaction with NHEJ1/XLF but disrupts ability to bridge DNA and promotes detachment from DNA. Phosphorylation at Ser-319 and Ser-320 by PRKDC promotes recognition by the SCF(FBXW7) complex and subsequent ubiquitination via 'Lys-63'-linked ubiquitin. Phosphorylation at Thr-231 by CK2 promotes interaction with PNKP; regulating PNKP activity and localization to DNA damage sites. Phosphorylation by CK2 promotes interaction with APTX. Ubiquitinated at Lys-290 by the SCF(FBXW7) complex via 'Lys-63'-linked ubiquitination, thereby promoting double-strand break repair: the SCF(FBXW7) complex specifically recognizes XRCC4 when phosphorylated at Ser-319 and Ser-320 by PRKDC, and 'Lys-63'-linked ubiquitination facilitates DNA non-homologous end joining (NHEJ) by enhancing association with XRCC5/Ku80 and XRCC6/Ku70. Monoubiquitinated. Post-translationally, undergoes proteolytic processing by caspase-3 (CASP3). This generates the protein XRCC4, C-terminus (XRCC4/C), which translocates to the cytoplasm and activates phospholipid scramblase activity of XKR4, thereby promoting phosphatidylserine exposure on apoptotic cell surface.

Its subcellular location is the nucleus. It is found in the chromosome. It localises to the cytoplasm. DNA non-homologous end joining (NHEJ) core factor, required for double-strand break repair and V(D)J recombination. Acts as a scaffold protein that regulates recruitment of other proteins to DNA double-strand breaks (DSBs). Associates with NHEJ1/XLF to form alternating helical filaments that bridge DNA and act like a bandage, holding together the broken DNA until it is repaired. The XRCC4-NHEJ1/XLF subcomplex binds to the DNA fragments of a DSB in a highly diffusive manner and robustly bridges two independent DNA molecules, holding the broken DNA fragments in close proximity to one other. The mobility of the bridges ensures that the ends remain accessible for further processing by other repair factors. Plays a key role in the NHEJ ligation step of the broken DNA during DSB repair via direct interaction with DNA ligase IV (LIG4): the LIG4-XRCC4 subcomplex reseals the DNA breaks after the gap filling is completed. XRCC4 stabilizes LIG4, regulates its subcellular localization and enhances LIG4's joining activity. Binding of the LIG4-XRCC4 subcomplex to DNA ends is dependent on the assembly of the DNA-dependent protein kinase complex DNA-PK to these DNA ends. Promotes displacement of PNKP from processed strand break termini. In terms of biological role, acts as an activator of the phospholipid scramblase activity of XKR4. This form, which is generated upon caspase-3 (CASP3) cleavage, translocates into the cytoplasm and interacts with XKR4, thereby promoting phosphatidylserine scramblase activity of XKR4 and leading to phosphatidylserine exposure on apoptotic cell surface. The protein is DNA repair protein XRCC4 of Mus musculus (Mouse).